We begin with the raw amino-acid sequence, 1214 residues long: Inner capsid protein VP3 (1214 aa).

The segment at 1 to 80 (MPRRSARKAQ…SVNNDGDIIT (80 aa)) is disordered. The span at 8 to 18 (KAQSATASPAD) shows a compositional bias: polar residues. Residues 28–51 (PTTNSPPSTTSPNQAAADANQQQA) show a composition bias toward low complexity. The segment at 117–140 (YVCNVCNARFSTMSALSEHLRSDH) adopts a C2H2-type zinc-finger fold.

Belongs to the turreted BTV-fold inner capsid family. As to quaternary structure, homodecamer; each decamer is made up of two conformers of VP2, called VP2A and VP2B. 12 homodecamers assemble to form an icosahedral capsid. Interacts with VP6.

It localises to the virion. Its function is as follows. Inner capsid protein that self-assembles to form an icosahedral capsid with a T=2 symmetry, which consists of 120 copies of VP2, with channels at each of its five-fold vertices. This capsid constitutes the innermost concentric layer of the viral mature particle. The polypeptide is Inner capsid protein VP3 (S3) (Notemigonus crysoleucas (Golden shiner)).